Here is a 222-residue protein sequence, read N- to C-terminus: Chorionic somatomammotropin hormone-like 1 (222 aa).

The first 26 residues, 1-26, serve as a signal peptide directing secretion; that stretch reads MAAGSRTSLLLAFALLCLPWLQEAGA. Positions 44 and 205 each coordinate Zn(2+). The cysteines at positions 213 and 220 are disulfide-linked.

It belongs to the somatotropin/prolactin family.

The protein resides in the secreted. Its function is as follows. May be a novel gestational hormone required to compensate for absence of other members of the GH/CS cluster during gestation. The chain is Chorionic somatomammotropin hormone-like 1 (CSHL1) from Homo sapiens (Human).